The primary structure comprises 292 residues: Elongation factor Ts (292 aa).

The involved in Mg(2+) ion dislocation from EF-Tu stretch occupies residues threonine 80–valine 83.

The protein belongs to the EF-Ts family.

The protein localises to the cytoplasm. Associates with the EF-Tu.GDP complex and induces the exchange of GDP to GTP. It remains bound to the aminoacyl-tRNA.EF-Tu.GTP complex up to the GTP hydrolysis stage on the ribosome. The chain is Elongation factor Ts from Ralstonia nicotianae (strain ATCC BAA-1114 / GMI1000) (Ralstonia solanacearum).